A 350-amino-acid polypeptide reads, in one-letter code: MVEKEEAGGGGGGGISEEEAAQYDRQIRLWGLEAQKRLRASRVLIVGMKGLGAEIAKNLILAGVKGLTMLDHEQVSPEDPGAQFLIQTGSVGRNRAEASLERAQNLNPMVDVKVDTEDVEKKPESFFTKFDAVCLTCCSRDVIIKVDQICHRNSIKFFTGDVFGYHGYTFANLGEHEFVEEKTKVAKVSQGVEDGPEAKRAKLDSSETTMVKKKVLFCPVKEALEVDWSGEKAKAALKRTAPDYFLLQVLLKFRTDKGRDPTSESYKEDAELLLQIRNDVFDSLGISPDLLPDDFVRYCFSEMAPVCAVVGGILAQEIVKALSQRDPPHNNFFFFDGMKGSGIVECLGPQ.

Met-1 carries the N-acetylmethionine modification. Position 2 is an N-acetylvaline; in SUMO-activating enzyme subunit 1, N-terminally processed (Val-2). At Ser-16 the chain carries Phosphoserine. Position 202 is an N6-acetyllysine (Lys-202).

This sequence belongs to the ubiquitin-activating E1 family. As to quaternary structure, heterodimer of SAE1 and UBA2/SAE2. The heterodimer corresponds to the two domains that are encoded on a single polypeptide chain in ubiquitin-activating enzyme E1. Interacts with UBE2I. Broadly expressed, with highest levels in testis.

Its subcellular location is the nucleus. It participates in protein modification; protein sumoylation. Its function is as follows. The heterodimer acts as an E1 ligase for SUMO1, SUMO2, SUMO3, and probably SUMO4. It mediates ATP-dependent activation of SUMO proteins followed by formation of a thioester bond between a SUMO protein and a conserved active site cysteine residue on UBA2/SAE2. The protein is SUMO-activating enzyme subunit 1 (Sae1) of Mus musculus (Mouse).